Reading from the N-terminus, the 224-residue chain is MIKLGNDWDELLKDEFNQPYYLTLRQFLKKEYQTKKVFPDMYDIFNALKYTACKDVKVVILGQDPYHGPGQAHGLSFSVQQGVQIPPSLQNIYLELHNDLNCEIPNNGYLIRWADQGVLLLNTVLTVRAGQANSHRGQGWEILTNRIIEIINQKEEPVVFLLWGNNAKEKLQLLTNPKHTAFTSVHPSPLSASRGFMGCKHFSKTNQFLEQNGVKPIDWQIPSI.

The active-site Proton acceptor is the Asp-64.

The protein belongs to the uracil-DNA glycosylase (UDG) superfamily. UNG family.

Its subcellular location is the cytoplasm. It catalyses the reaction Hydrolyzes single-stranded DNA or mismatched double-stranded DNA and polynucleotides, releasing free uracil.. In terms of biological role, excises uracil residues from the DNA which can arise as a result of misincorporation of dUMP residues by DNA polymerase or due to deamination of cytosine. In Listeria monocytogenes serotype 4b (strain F2365), this protein is Uracil-DNA glycosylase 2.